The following is a 76-amino-acid chain: Conotoxin VnMKLT2-013 (76 aa).

Positions 1–23 (MMKLTCVLIIAVLFLTACQLTTA) are cleaved as a signal peptide. A propeptide spanning residues 24–42 (ETRDEYRAVRSSDEVQNSR) is cleaved from the precursor. The tract at residues 29 to 49 (YRAVRSSDEVQNSRSTDDCST) is disordered. 3 disulfide bridges follow: cysteine 47/cysteine 58, cysteine 52/cysteine 63, and cysteine 57/cysteine 72.

It belongs to the conotoxin O1 superfamily. Expressed by the venom duct.

Its subcellular location is the secreted. The chain is Conotoxin VnMKLT2-013 from Conus ventricosus (Mediterranean cone).